The sequence spans 207 residues: MKGQLFVICGPSGAGKTSIIKEVLKRLDNVVFSVSCTTRPKRPHEEDGKDYFFITEEEFLKRVERGEFLEWARVHGHLYGTLRSFVESHINEGKDVVLDIDVQGALSVKKKYSNTVFIYVAPPSYADLRERILKRGTEKEADVLVRLENAKWELMFMDEFDYIVVNENLEDAVEMVVSIVRSERAKVTRNQDKIERFKMEVKGWKKL.

The Guanylate kinase-like domain maps to 3–181; the sequence is GQLFVICGPS…AVEMVVSIVR (179 aa). 10–17 contacts ATP; sequence GPSGAGKT.

It belongs to the guanylate kinase family.

Its subcellular location is the cytoplasm. The enzyme catalyses GMP + ATP = GDP + ADP. Functionally, essential for recycling GMP and indirectly, cGMP. This chain is Guanylate kinase (gmk), found in Thermotoga maritima (strain ATCC 43589 / DSM 3109 / JCM 10099 / NBRC 100826 / MSB8).